The chain runs to 429 residues: SVP1-like protein 2 (429 aa).

4 WD repeats span residues 10-48, 50-96, 178-218, and 223-262; these read PVLAPVLSVTFNHDNSCFAVGLDHGFRIYESGSCVLRTS, DFGA…QVGV, AHTS…RLYE, and IDKAIIFSIGFSPSGKYLACTSDKSTLHVFDVTRPGGTRP. Residues 262–297 are disordered; it reads PITSNGGTAYAAGEPSVTGNNRPSSPYSVASSSGGG.

It belongs to the WD repeat PROPPIN family.

It localises to the vacuole membrane. The protein resides in the cytoplasmic vesicle membrane. Functionally, involved in mitochondrial or peroxisomal functions and amino acid signaling pathways. This chain is SVP1-like protein 2 (apg-14), found in Neurospora crassa (strain ATCC 24698 / 74-OR23-1A / CBS 708.71 / DSM 1257 / FGSC 987).